We begin with the raw amino-acid sequence, 382 residues long: Manganese peroxidase H4 (382 aa).

The N-terminal stretch at 1-24 (MAFGSLLAFVALAAITRAAPTAES) is a signal peptide. Intrachain disulfides connect cysteine 27–cysteine 39, cysteine 38–cysteine 313, cysteine 57–cysteine 141, cysteine 277–cysteine 344, and cysteine 366–cysteine 373. The Mn(2+) site is built by glutamate 59 and glutamate 63. The Proton acceptor role is filled by histidine 70. Ca(2+)-binding residues include aspartate 71, glycine 86, aspartate 88, and serine 90. 2 N-linked (GlcNAc...) asparagine glycosylation sites follow: asparagine 100 and asparagine 155. Histidine 197 is a binding site for heme b. Threonine 198 contributes to the Ca(2+) binding site. A Mn(2+)-binding site is contributed by aspartate 203. Ca(2+) is bound by residues aspartate 215, threonine 217, threonine 220, and aspartate 222. The N-linked (GlcNAc...) asparagine glycan is linked to asparagine 241.

Belongs to the peroxidase family. Ligninase subfamily. It depends on heme b as a cofactor. Ca(2+) serves as cofactor.

Its subcellular location is the secreted. It carries out the reaction 2 Mn(2+) + H2O2 + 2 H(+) = 2 Mn(3+) + 2 H2O. Its function is as follows. Catalyzes the oxidation of Mn(2+) to Mn(3+). The latter, acting as a diffusible redox mediator, is capable of oxidizing a variety of lignin compounds. This Phanerodontia chrysosporium (White-rot fungus) protein is Manganese peroxidase H4.